We begin with the raw amino-acid sequence, 152 residues long: Histone deacetylase complex subunit SAP18 (152 aa).

The disordered stretch occupies residues 1–38 (MAEAARRQGGGRPLPPPPRGVNQQPPRPKPEPVDREKT). Basic and acidic residues predominate over residues 28-38 (PKPEPVDREKT).

It belongs to the SAP18 family. Interacts with SIN3, ERF3, ERF4 and HDA19. As to expression, ubiquitous, with low level in flowers.

Its function is as follows. Links the histone deacetylase complex to transcriptional repressors bound to chromatin. Involved in the tethering of the SIN3 complex to core histone proteins. The sequence is that of Histone deacetylase complex subunit SAP18 from Arabidopsis thaliana (Mouse-ear cress).